An 86-amino-acid chain; its full sequence is RNA-binding protein Hfq (86 aa).

Residues 9–69 form the Sm domain; the sequence is DRFLNILRTS…VSTIMPESFV (61 aa).

It belongs to the Hfq family. In terms of assembly, homohexamer.

Its function is as follows. RNA chaperone that binds small regulatory RNA (sRNAs) and mRNAs to facilitate mRNA translational regulation in response to envelope stress, environmental stress and changes in metabolite concentrations. Also binds with high specificity to tRNAs. The sequence is that of RNA-binding protein Hfq from Thermosipho melanesiensis (strain DSM 12029 / CIP 104789 / BI429).